The chain runs to 4912 residues: Probable E3 ubiquitin-protein ligase HERC2 (4912 aa).

The segment at 1–67 is disordered; sequence MFNRQASGGA…GSGSAAPPSH (67 aa). Residues 8 to 17 show a composition bias toward gly residues; it reads GGAGSSGQGA. Positions 18–31 are enriched in low complexity; that stretch reads GSSQTASAAPVSAG. 2 stretches are compositionally biased toward gly residues: residues 32-41 and 49-59; these read VGVGGGGGAS and SAAGSGSGSGS. RCC1 repeat units follow at residues 634 to 685, 686 to 739, 741 to 789, 791 to 843, and 844 to 897; these read NHNA…AITC, GGNL…ALTS, GLVF…ALSS, GQLY…ALSS, and SGEV…VWTQ. Disordered regions lie at residues 1102-1129, 1428-1475, and 1659-1681; these read RLSPTLGKQQEKEEEEREQQHQEPSTSP, QLLQ…PGRG, and QEQEKKPQSMPKQELEEQEEEET. Over residues 1446–1458 the composition is skewed to polar residues; the sequence is SHSCHSTAGNTPT. Threonine 1776 bears the Phosphothreonine mark. The MIB/HERC2 domain maps to 1917-1990; sequence SGPDLAKLMK…QYDLQLADSA (74 aa). Disordered stretches follow at residues 1994-2018 and 2381-2412; these read ASPTEPEREDVSGSEASPTSDSHPS and GSIYASPDEPDRSDAESQQPGEQDQQLSSGSG. The segment covering 2396–2412 has biased composition (polar residues); sequence ESQQPGEQDQQLSSGSG. Residues 2511-2557 form the UBA domain; that stretch reads ATDAQLIGQIMEMGFTRRTVELALKQLSLQAEIMPTPEQIVQWILEH. The tract at residues 2572–2620 is disordered; it reads LASSASSHDPEADSDNECPSSNSTTSSSTSSDTVEGQPMAVSGPAPPVK. Residues 2591-2604 are compositionally biased toward low complexity; that stretch reads SSNSTTSSSTSSDT. In terms of domain architecture, CPH spans 2624–2699; that stretch reads RKDFQTADLY…VCFVHIELVE (76 aa). Residues 2780–2958 enclose the DOC domain; sequence TSATLPSLGD…FLASEYSAGV (179 aa). 7 RCC1 repeats span residues 2985–3036, 3037–3090, 3091–3142, 3144–3194, 3197–3248, 3250–3300, and 3302–3352; these read PCTV…IVSQ, DGKV…ALTL, DGKV…AISS, GELY…TLAL, DGAV…ALTR, GEVW…AVTD, and GQVY…AWGL. 2 disordered regions span residues 3352–3374 and 3953–4000; these read LPNASSDEEKRGPVPFSSTRDPL and LPSS…EQPD. Over residues 3974–3988 the composition is skewed to low complexity; that stretch reads LNSTTSLSSSTVSNV. RCC1 repeat units lie at residues 4049–4099, 4101–4153, 4155–4205, 4207–4259, 4261–4311, 4313–4363, and 4365–4415; these read STIY…AVTP, GKLF…ALTT, GEVY…AITA, GHVL…CITD, DNVW…ALTK, GAVY…ACSD, and GEVY…ALST. The HECT domain maps to 4547-4882; the sequence is ALALPHRVWK…IHFCKSIDTD (336 aa). Cysteine 4850 functions as the Glycyl thioester intermediate in the catalytic mechanism. The interval 4891–4912 is disordered; that stretch reads EPTEATGSEDNSDLESVASHEG.

The protein localises to the cytoplasm. It is found in the cytoskeleton. It localises to the microtubule organizing center. Its subcellular location is the centrosome. The protein resides in the centriole. It catalyses the reaction S-ubiquitinyl-[E2 ubiquitin-conjugating enzyme]-L-cysteine + [acceptor protein]-L-lysine = [E2 ubiquitin-conjugating enzyme]-L-cysteine + N(6)-ubiquitinyl-[acceptor protein]-L-lysine.. Its pathway is protein modification; protein ubiquitination. In terms of biological role, probable E3 ubiquitin-protein ligase which accepts ubiquitin from an E2 ubiquitin-conjugating enzyme in the form of a thioester and then directly transfers the ubiquitin to targeted substrates. The protein is Probable E3 ubiquitin-protein ligase HERC2 (HERC2) of Drosophila melanogaster (Fruit fly).